A 205-amino-acid polypeptide reads, in one-letter code: dITP/XTP pyrophosphatase (205 aa).

Position 8-13 (S8–K13) interacts with substrate. D69 serves as the catalytic Proton acceptor. D69 provides a ligand contact to Mg(2+). Residues S70, H153–D156, K176, and H181–R182 each bind substrate.

It belongs to the HAM1 NTPase family. As to quaternary structure, homodimer. Mg(2+) is required as a cofactor.

The enzyme catalyses XTP + H2O = XMP + diphosphate + H(+). The catalysed reaction is dITP + H2O = dIMP + diphosphate + H(+). It carries out the reaction ITP + H2O = IMP + diphosphate + H(+). In terms of biological role, pyrophosphatase that catalyzes the hydrolysis of nucleoside triphosphates to their monophosphate derivatives, with a high preference for the non-canonical purine nucleotides XTP (xanthosine triphosphate), dITP (deoxyinosine triphosphate) and ITP. Seems to function as a house-cleaning enzyme that removes non-canonical purine nucleotides from the nucleotide pool, thus preventing their incorporation into DNA/RNA and avoiding chromosomal lesions. The protein is dITP/XTP pyrophosphatase of Shewanella oneidensis (strain ATCC 700550 / JCM 31522 / CIP 106686 / LMG 19005 / NCIMB 14063 / MR-1).